The sequence spans 254 residues: Low affinity immunoglobulin gamma Fc region receptor III-A (254 aa).

A signal peptide spans 1 to 20; the sequence is MWHLLPPSALLLLISSVTKA. Topologically, residues 21–209 are extracellular; that stretch reads ADPSKAVVLL…IAPLFPLWQQ (189 aa). Ig-like C2-type domains lie at 23–104 and 121–174; these read PSKA…VQLQ and KGES…YYCR. 4 N-linked (GlcNAc...) asparagine glycosylation sites follow: N42, N63, N166, and N181. 2 cysteine pairs are disulfide-bonded: C47–C90 and C129–C173. Residues 210-230 form a helical membrane-spanning segment; it reads IAFCLMMGLLFAVDTGLYFFV. At 231–254 the chain is on the cytoplasmic side; it reads RRDLRRSMVHKEEYNFKWSQAQDK.

Forms a heterooligomeric complex with ITAM-containing signaling subunits FCER1G. Interacts (via transmembrane domain) with signaling subunits; this interaction is a prerequisite for receptor complex expression on the cell surface and intracellular signal transduction. Binds the Fc region of antigen-complexed IgG. Post-translationally, N-glycosylated. In terms of processing, phosphorylated following receptor ligation.

Its subcellular location is the cell membrane. Receptor for the invariable Fc fragment of immunoglobulin gamma (IgG). Binds with intermediate affinity to both IgG2a and IgG2b. Can bind to IgG2a and IgG2b monomers. Does not display binding to IgG1 or IgG3. Recognizes neutralizing virus-specific IgGs displayed on the cell surface of infected cells and triggers antibody-dependent cellular cytotoxicity (ADCC). Confers protection to lethal influenza virus infection. On splenic dendritic cells, uptakes antigen immune complexes and efficiently divert them into MHC class I and II antigen presentation pathways to provide for superior priming of CD4-positive and CD8-positive T cell immune responses. Mediates neutrophil activation by IgG complexes redundantly with FCGR2A. Plays a role in promoting bone resorption by enhancing osteoclast differentiation following binding to IgG2a. Also acts as a receptor for the Fc region of immunoglobulin epsilon (IgE). Binds with low affinity to both the a and b allotypes of IgE. Has also been shown to bind to IgE allotype a only but not to allotype b. Binds aggregated IgE but not the monomeric form and bound monomeric IgG is readily displaced by IgE complexes. Binding to IgE promotes macrophage-mediated phagocytosis, antigen presentation to T cells, production of pro-inflammatory cytokines and the late phase of cutaneous allergic reactions. Mediates enhanced ADCC in response to afucosylated IgGs. This Cavia porcellus (Guinea pig) protein is Low affinity immunoglobulin gamma Fc region receptor III-A.